A 134-amino-acid polypeptide reads, in one-letter code: Replication enhancer protein (134 aa).

It belongs to the geminiviridae replication enhancer protein family. As to quaternary structure, homooligomer. Interacts with the replication-associated protein (REP). Interacts with host proliferating cell nuclear antigen (PCNA). Interacts with host retinoblastoma-related protein 1 (RBR1), and may thereby deregulate the host cell cycle. Oligomerization and interaction with PCNA are necessary for optimal replication enhancement.

In terms of biological role, increases viral DNA accumulation. Enhances infectivity and symptom expression. The sequence is that of Replication enhancer protein from Solanum lycopersicum (Tomato).